Consider the following 147-residue polypeptide: Transthyretin (147 aa).

An N-terminal signal peptide occupies residues 1–20; it reads MASHRLLLLCLAGLVFVSEA. C30 carries the sulfocysteine modification. K35 is an L-thyroxine binding site. E62 bears the 4-carboxyglutamate mark. S72 is subject to Phosphoserine. E74 is a binding site for L-thyroxine. A glycan (N-linked (GlcNAc...) asparagine) is linked at N118. S137 contacts L-thyroxine.

The protein belongs to the transthyretin family. As to quaternary structure, homotetramer. Dimer of dimers. In the homotetramer, subunits assemble around a central channel that can accommodate two ligand molecules. Interacts with RBP4. Sulfonation of the reactive cysteine Cys-30 enhances the stability of the native conformation of TTR, avoiding misassembly of the protein leading to amyloid formation. In terms of tissue distribution, detected in liver.

It localises to the secreted. Functionally, thyroid hormone-binding protein. Probably transports thyroxine from the bloodstream to the brain. This chain is Transthyretin (TTR), found in Pongo abelii (Sumatran orangutan).